Reading from the N-terminus, the 386-residue chain is Phosphatidyl-myo-inositol mannosyltransferase (386 aa).

Y9 and G16 together coordinate GDP-alpha-D-mannose. A 1,2-diacyl-sn-glycero-3-phospho-(1D-myo-inositol) contacts are provided by residues Q18, 62–63, and R68; that span reads YN. Residues R196, 201–202, 251–253, K256, 274–278, and E282 each bind GDP-alpha-D-mannose; these read RK, VDD, and ESFGI.

The protein belongs to the glycosyltransferase group 1 family. Glycosyltransferase 4 subfamily. Monomer. Mg(2+) is required as a cofactor.

It localises to the cell membrane. The enzyme catalyses a 1,2-diacyl-sn-glycero-3-phospho-(1D-myo-inositol) + GDP-alpha-D-mannose = a 1,2-diacyl-sn-glycero-3-phospho-[alpha-D-mannopyranosyl-(1&lt;-&gt;6)-D-myo-inositol] + GDP + H(+). Its pathway is phospholipid metabolism; phosphatidylinositol metabolism. Functionally, involved in the biosynthesis of phosphatidyl-myo-inositol mannosides (PIM) which are early precursors in the biosynthesis of lipomannans (LM) and lipoarabinomannans (LAM). Catalyzes the addition of a mannosyl residue from GDP-D-mannose (GDP-Man) to the position 2 of the carrier lipid phosphatidyl-myo-inositol (PI) to generate a phosphatidyl-myo-inositol bearing an alpha-1,2-linked mannose residue (PIM1). In contrary to PimB, the mannosyltransferase PimA is unable to transfer a mannose residue to the position 6 of the phosphatidyl-myo-inositol of PIM1. The chain is Phosphatidyl-myo-inositol mannosyltransferase from Mycolicibacterium smegmatis (strain ATCC 700084 / mc(2)155) (Mycobacterium smegmatis).